A 317-amino-acid polypeptide reads, in one-letter code: Cyclin-T1-3 (317 aa).

The protein belongs to the cyclin family. Cyclin T subfamily. Interacts with CDKC-1 and CDKC-2. Abundantly expressed in flowers. Expressed in roots, seedlings, rosettes and stems.

In Arabidopsis thaliana (Mouse-ear cress), this protein is Cyclin-T1-3 (CYCT1-3).